Here is a 119-residue protein sequence, read N- to C-terminus: Protein TusC (119 aa).

The protein belongs to the DsrF/TusC family. In terms of assembly, heterohexamer, formed by a dimer of trimers. The hexameric TusBCD complex contains 2 copies each of TusB, TusC and TusD. The TusBCD complex interacts with TusE.

It localises to the cytoplasm. Part of a sulfur-relay system required for 2-thiolation of 5-methylaminomethyl-2-thiouridine (mnm(5)s(2)U) at tRNA wobble positions. This is Protein TusC from Escherichia coli O8 (strain IAI1).